Here is a 421-residue protein sequence, read N- to C-terminus: Glucan 1,3-beta-glucosidase (421 aa).

The first 15 residues, 1 to 15, serve as a signal peptide directing secretion; it reads MKLTKLVALAGAALA. The active-site Proton donor is the E213. 2 cysteine pairs are disulfide-bonded: C296–C419 and C321–C347. Catalysis depends on E313, which acts as the Nucleophile.

This sequence belongs to the glycosyl hydrolase 5 (cellulase A) family.

The protein localises to the secreted. The enzyme catalyses Successive hydrolysis of beta-D-glucose units from the non-reducing ends of (1-&gt;3)-beta-D-glucans, releasing alpha-glucose.. This Yarrowia lipolytica (strain CLIB 122 / E 150) (Yeast) protein is Glucan 1,3-beta-glucosidase (EXG1).